A 290-amino-acid polypeptide reads, in one-letter code: Putative tyrosine recombinase TTE1313 (290 aa).

The region spanning 1–85 (MAESVVGEFL…SIKAFYHYLF (85 aa)) is the Core-binding (CB) domain. The Tyr recombinase domain maps to 106–290 (KEPVTLTVEQ…EVYNKFHPRA (185 aa)). Residue Arg-239 is part of the active site. Tyr-283 acts as the O-(3'-phospho-DNA)-tyrosine intermediate in catalysis.

The protein belongs to the 'phage' integrase family.

It is found in the cytoplasm. Site-specific tyrosine recombinase, which acts by catalyzing the cutting and rejoining of the recombining DNA molecules. In Caldanaerobacter subterraneus subsp. tengcongensis (strain DSM 15242 / JCM 11007 / NBRC 100824 / MB4) (Thermoanaerobacter tengcongensis), this protein is Putative tyrosine recombinase TTE1313.